The primary structure comprises 107 residues: SOSS complex subunit C (107 aa).

Belongs to the SOSS-C family. As to quaternary structure, belongs to the multiprotein complex Integrator. Component of the SOSS complex, composed of soss-b (soss-b1/nabp2 or soss-b2/nabp1), soss-a/ints3 and soss-c/inip.

The protein localises to the nucleus. Its function is as follows. Component of the SOSS complex, a multiprotein complex that functions downstream of the MRN complex to promote DNA repair and G2/M checkpoint. The SOSS complex associates with single-stranded DNA at DNA lesions and influences diverse endpoints in the cellular DNA damage response including cell-cycle checkpoint activation, recombinational repair and maintenance of genomic stability. Required for efficient homologous recombination-dependent repair of double-strand breaks (DSBs). The polypeptide is SOSS complex subunit C (inip) (Salmo salar (Atlantic salmon)).